Consider the following 346-residue polypeptide: MKFAILFGGNSYEHEISIVSAVVLKKVINQNLEFVFCDEERRFYHIPSEKMNSKTFSTKAYKNEKELFIKQGGFFSKGFLKENKLECECVINLIHGRDGEDGKIAALFEFYSIKFIGPRLEASVLSFNKELTKLYAKSVGVKTLDYTMLRKNQNSKEKLSFPCIIKPARLGSSIGISIVKDEKDLEYAKDVGFEFDNDLVVEEFKNNIKEYNLAGCMINDEFVFSIIEEPKKKEFLDFEQKYLSFSGHNELIEADLSEELKEKLKDSFKKIYNPLFKGALIRCDFFILDNEVYLNEINPNPGSLANYLFKDFNTTLNALADQISLEKMIKINYNFLHSINGQKGKL.

One can recognise an ATP-grasp domain in the interval 133–327 (KLYAKSVGVK…ALADQISLEK (195 aa)). Residue 159–211 (LSFPCIIKPARLGSSIGISIVKDEKDLEYAKDVGFEFDNDLVVEEFKNNIKEY) coordinates ATP. Mg(2+)-binding residues include D284, E296, and N298.

This sequence belongs to the D-alanine--D-alanine ligase family. Mg(2+) is required as a cofactor. It depends on Mn(2+) as a cofactor.

It localises to the cytoplasm. It catalyses the reaction 2 D-alanine + ATP = D-alanyl-D-alanine + ADP + phosphate + H(+). It participates in cell wall biogenesis; peptidoglycan biosynthesis. Cell wall formation. The chain is D-alanine--D-alanine ligase from Campylobacter jejuni subsp. jejuni serotype O:6 (strain 81116 / NCTC 11828).